The following is a 253-amino-acid chain: 3-dehydroquinate dehydratase (253 aa).

3-dehydroquinate contacts are provided by residues 46-48 and Arg-82; that span reads EWR. Catalysis depends on His-143, which acts as the Proton donor/acceptor. Lys-170 (schiff-base intermediate with substrate) is an active-site residue. Residues Arg-213, Ser-232, and Gln-236 each contribute to the 3-dehydroquinate site.

It belongs to the type-I 3-dehydroquinase family. As to quaternary structure, homodimer.

The catalysed reaction is 3-dehydroquinate = 3-dehydroshikimate + H2O. It participates in metabolic intermediate biosynthesis; chorismate biosynthesis; chorismate from D-erythrose 4-phosphate and phosphoenolpyruvate: step 3/7. Its function is as follows. Involved in the third step of the chorismate pathway, which leads to the biosynthesis of aromatic amino acids. Catalyzes the cis-dehydration of 3-dehydroquinate (DHQ) and introduces the first double bond of the aromatic ring to yield 3-dehydroshikimate. This is 3-dehydroquinate dehydratase from Bacillus velezensis (strain DSM 23117 / BGSC 10A6 / LMG 26770 / FZB42) (Bacillus amyloliquefaciens subsp. plantarum).